Consider the following 707-residue polypeptide: Zinc finger CCHC domain-containing protein 8 (707 aa).

The residue at position 2 (Ala-2) is an N-acetylalanine. Positions 16–44 (FDHPEESIPKPVHTRFKDDDGDEEDENGV) are disordered. Acidic residues predominate over residues 34 to 43 (DDGDEEDENG). The stretch at 45-80 (GDAELRERLRQCEETIEQLRAENQELKRKLNILTRP) forms a coiled coil. The CCHC-type zinc-finger motif lies at 227–244 (PHCFNCGSEEHQMKDCPM). 2 RBM7 binding regions span residues 286-299 (FKPGVISEELQDAL) and 309-324 (FIYRMRQLGYPPGWLK). Thr-342 is subject to Phosphothreonine. Disordered regions lie at residues 409 to 518 (APGV…LTLE), 531 to 607 (LEQA…TSLC), and 641 to 660 (QKLFPADTSPSTATKIHSPI). Lys-413 participates in a covalent cross-link: Glycyl lysine isopeptide (Lys-Gly) (interchain with G-Cter in SUMO2). A compositionally biased stretch (low complexity) spans 456 to 465 (SQSSESFQFQ). Over residues 466 to 496 (PPLPPDTPPLPRGTPPPVFTPPLPKGTPPLT) the composition is skewed to pro residues. Phosphothreonine is present on residues Thr-472, Thr-479, and Thr-485. Thr-492 carries the phosphothreonine; by GSK3 modification. The stretch at 516-539 (TLEELEEQQRRIWAALEQAESVNS) forms a coiled coil. Polar residues predominate over residues 549 to 559 (LTGNSVASSPC). At Thr-577 the chain carries Phosphothreonine. A Phosphoserine modification is found at Ser-598. Polar residues predominate over residues 598–607 (SPDSEVTSLC). Thr-648 bears the Phosphothreonine mark. A phosphoserine mark is found at Ser-649, Ser-658, and Ser-695. Residues 659-707 (PIPDMSKFATGITPFEFENMAESTGMYLRIRSLLKNSPRNQQKNKKASE) form an MTREX binding region.

This sequence belongs to the ZCCHC8 family. As to quaternary structure, component of a nuclear TRAMP-like complex, an ATP-dependent exosome regulatory complex consisting of a helicase (MTREX), an oligadenylate polymerase (TENT4B or TENT4A), and a substrate specific RNA-binding factor (ZCCHC7 or ZCCHC8). Several TRAMP-like complexes exist with specific compositions and are associated with nuclear, or nucleolar RNA exosomes. Identified in the spliceosome C complex. Component of the nuclear exosome targeting (NEXT) complex composed of MTREX, ZCCHC8, and RBM7 that directs a subset of non-coding short-lived RNAs for exosomal degradation. Interacts with proteins involved in RNA processing and degradation such as MTREX and RBM7; interaction with MTREX enhances MTREX RNA helicase activity and bridges between RBM7 and MTREX. Interacts with TERC, the telomerase RNA component. Phosphorylation at Thr-492 by GSK3 is triggered in cells entering mitosis; this phosphorylation is greatly enhanced by nocodazole treatment, but reduced by lithium.

The protein resides in the nucleus. The protein localises to the nucleoplasm. Scaffolding subunit of the trimeric nuclear exosome targeting (NEXT) complex that is involved in the surveillance and turnover of aberrant transcripts and non-coding RNAs. NEXT functions as an RNA exosome cofactor that directs a subset of non-coding short-lived RNAs for exosomal degradation. May be involved in pre-mRNA splicing. It is required for 3'-end maturation of telomerase RNA component (TERC), TERC 3'-end targeting to the nuclear RNA exosome, and for telomerase function. In Homo sapiens (Human), this protein is Zinc finger CCHC domain-containing protein 8 (ZCCHC8).